The sequence spans 94 residues: C-X-C motif chemokine 11 (94 aa).

A signal peptide spans 1 to 21 (MSVKGMAIALAVILCATVVQG). Arginine 27 carries the citrulline; by PAD2 modification. 2 cysteine pairs are disulfide-bonded: cysteine 30/cysteine 57 and cysteine 32/cysteine 74.

As to quaternary structure, interacts with TNFAIP6 (via Link domain). In terms of tissue distribution, high levels in peripheral blood leukocytes, pancreas and liver astrocytes. Moderate levels in thymus, spleen and lung. Low levels in placenta, prostate and small intestine. Also found in epidermal basal layer keratinocytes in skin disorders.

The protein resides in the secreted. Chemotactic for interleukin-activated T-cells but not unstimulated T-cells, neutrophils or monocytes. Induces calcium release in activated T-cells. Binds to CXCR3. May play an important role in CNS diseases which involve T-cell recruitment. May play a role in skin immune responses. The sequence is that of C-X-C motif chemokine 11 (CXCL11) from Homo sapiens (Human).